Reading from the N-terminus, the 177-residue chain is Non-specific lipid transfer protein GPI-anchored 22 (177 aa).

A signal peptide spans 1–29 (MARFMAYNQNPQMLALCITVAVMFLGVRS). Intrachain disulfides connect cysteine 38/cysteine 81, cysteine 48/cysteine 63, cysteine 64/cysteine 108, and cysteine 79/cysteine 117. N-linked (GlcNAc...) asparagine glycosylation occurs at asparagine 113. A lipid anchor (GPI-anchor amidated serine) is attached at serine 152. Residues 153–177 (SSIKGRDNKQFGLMMAGALSIWYIM) constitute a propeptide, removed in mature form.

This sequence belongs to the plant LTP family. In terms of tissue distribution, expressed in seedlings, preferentially in hypocotyls and roots. Also observed in siliques.

The protein resides in the cell membrane. Functionally, probable lipid transfer protein. In Arabidopsis thaliana (Mouse-ear cress), this protein is Non-specific lipid transfer protein GPI-anchored 22.